The sequence spans 634 residues: DNA-directed RNA polymerase subunit gamma (634 aa).

Residues C74, C76, C89, and C92 each coordinate Zn(2+). Mg(2+) contacts are provided by D471, D473, and D475.

The protein belongs to the RNA polymerase beta' chain family. RpoC1 subfamily. As to quaternary structure, in cyanobacteria the RNAP catalytic core is composed of 2 alpha, 1 beta, 1 beta', 1 gamma and 1 omega subunit. When a sigma factor is associated with the core the holoenzyme is formed, which can initiate transcription. The cofactor is Mg(2+). Requires Zn(2+) as cofactor.

The enzyme catalyses RNA(n) + a ribonucleoside 5'-triphosphate = RNA(n+1) + diphosphate. In terms of biological role, DNA-dependent RNA polymerase catalyzes the transcription of DNA into RNA using the four ribonucleoside triphosphates as substrates. The polypeptide is DNA-directed RNA polymerase subunit gamma (Synechococcus sp. (strain CC9311)).